Consider the following 472-residue polypeptide: 2-amino-4-ketopentanoate thiolase beta subunit (472 aa).

Lysine 102 is modified (N6-(pyridoxal phosphate)lysine). Pyridoxal 5'-phosphate-binding positions include asparagine 128 and 238-242; that span reads AGGGN.

It belongs to the threonine synthase family. In terms of assembly, heterodimer with OrtA. It depends on pyridoxal 5'-phosphate as a cofactor.

The enzyme catalyses D-alanine + acetyl-CoA = (2R)-2-amino-4-oxopentanoate + CoA. In terms of biological role, involved in the ornithine fermentation pathway. Catalyzes the thiolytic cleavage of 2-amino-4-ketopentanoate (AKP) with coenzyme A (CoA) to form acetyl-CoA and alanine. It is strictly specific for AKP. This Unknown prokaryotic organism protein is 2-amino-4-ketopentanoate thiolase beta subunit.